Reading from the N-terminus, the 115-residue chain is Parathyroid hormone (115 aa).

The first 25 residues, Met1 to Gly25, serve as a signal peptide directing secretion. Residues Lys26 to Arg31 constitute a propeptide that is removed on maturation. Positions Arg51–Gly69 are important for receptor binding. The segment at Ala73–Gln115 is disordered. Positions Lys84–Asp105 are enriched in basic and acidic residues.

Belongs to the parathyroid hormone family. In terms of assembly, interacts with PTH1R (via N-terminal extracellular domain).

The protein resides in the secreted. Functionally, parathyroid hormone elevates calcium level by dissolving the salts in bone and preventing their renal excretion. Acts by binding to its receptor, PTH1R, activating G protein-coupled receptor signaling. Stimulates [1-14C]-2-deoxy-D-glucose (2DG) transport and glycogen synthesis in osteoblastic cells. The polypeptide is Parathyroid hormone (Homo sapiens (Human)).